Reading from the N-terminus, the 181-residue chain is Inner kinetochore subunit MCM16 (181 aa).

Residues 112-171 (KQLIESRAERDELMSKLIELSSKFPKPTIPPDDSDTAGKQVEVEKENETIQELMIALQIH) are a coiled coil.

This sequence belongs to the CENP-H/MCM16 family. In terms of assembly, component of the heterotrimeric kinetochore subcomplex CTF3, which consists of CTF3, MCM16 and MCM22. The CTF3 subcomplex is part of a larger constitutive centromere-associated network (CCAN) (also known as central kinetochore CTF19 complex in yeast), which is composed of at least AME1, CHL4, CNN1, CTF3, CTF19, IML3, MCM16, MCM21, MCM22, MHF1, MHF2, MIF2, NKP1, NKP2, OKP1 and WIP1. Interacts with CTF19.

The protein localises to the nucleus. Its subcellular location is the chromosome. It localises to the centromere. The protein resides in the kinetochore. Its function is as follows. Component of the kinetochore, a multiprotein complex that assembles on centromeric DNA and attaches chromosomes to spindle microtubules, mediating chromosome segregation and sister chromatid segregation during meiosis and mitosis. Component of the inner kinetochore constitutive centromere-associated network (CCAN), which serves as a structural platform for outer kinetochore assembly. This Saccharomyces cerevisiae (strain ATCC 204508 / S288c) (Baker's yeast) protein is Inner kinetochore subunit MCM16 (MCM16).